Consider the following 298-residue polypeptide: Probable alpha-L-glutamate ligase 2 (298 aa).

The ATP-grasp domain maps to 104-287 (MQLLSRQGIG…VADAIICFME (184 aa)). ATP is bound by residues Lys-141, 178–179 (EY), Asp-187, and 211–213 (RSN). Mg(2+) contacts are provided by Asp-248, Glu-260, and Asn-262. Mn(2+) contacts are provided by Asp-248, Glu-260, and Asn-262.

The protein belongs to the RimK family. The cofactor is Mg(2+). Requires Mn(2+) as cofactor.

The protein is Probable alpha-L-glutamate ligase 2 of Shewanella frigidimarina (strain NCIMB 400).